A 369-amino-acid chain; its full sequence is Maltose/maltodextrin import ATP-binding protein MalK (369 aa).

The ABC transporter domain maps to 4-234 (VTLHNVSKAY…PVNRFVASFI (231 aa)). 36–43 (GPSGCGKS) contributes to the ATP binding site.

Belongs to the ABC transporter superfamily. Maltooligosaccharide importer (TC 3.A.1.1.1) family. In terms of assembly, the complex is composed of two ATP-binding proteins (MalK), two transmembrane proteins (MalG and MalK) and a solute-binding protein (MalE).

Its subcellular location is the cell inner membrane. It carries out the reaction D-maltose(out) + ATP + H2O = D-maltose(in) + ADP + phosphate + H(+). Functionally, part of the ABC transporter complex MalEFGK involved in maltose/maltodextrin import. Responsible for energy coupling to the transport system. In Photorhabdus laumondii subsp. laumondii (strain DSM 15139 / CIP 105565 / TT01) (Photorhabdus luminescens subsp. laumondii), this protein is Maltose/maltodextrin import ATP-binding protein MalK.